We begin with the raw amino-acid sequence, 354 residues long: Uroporphyrinogen decarboxylase (354 aa).

Substrate is bound by residues 27–31 (RQAGR), aspartate 77, tyrosine 154, threonine 209, and histidine 327.

This sequence belongs to the uroporphyrinogen decarboxylase family. In terms of assembly, homodimer.

Its subcellular location is the cytoplasm. The catalysed reaction is uroporphyrinogen III + 4 H(+) = coproporphyrinogen III + 4 CO2. Its pathway is porphyrin-containing compound metabolism; protoporphyrin-IX biosynthesis; coproporphyrinogen-III from 5-aminolevulinate: step 4/4. Its function is as follows. Catalyzes the decarboxylation of four acetate groups of uroporphyrinogen-III to yield coproporphyrinogen-III. In Klebsiella pneumoniae subsp. pneumoniae (strain ATCC 700721 / MGH 78578), this protein is Uroporphyrinogen decarboxylase.